Here is a 399-residue protein sequence, read N- to C-terminus: Ribonuclease T2-like 1-A (399 aa).

The N-terminal stretch at 1 to 17 (MLSILSIAALLIATVQA) is a signal peptide. Disulfide bonds link C24–C43, C32–C79, C42–C150, C87–C142, and C214–C249. Catalysis depends on residues H72, E135, and H139. The tract at residues 259–279 (KGNSGANTLTTKTTGTTTSGS) is disordered. Low complexity predominate over residues 262-279 (SGANTLTTKTTGTTTSGS). N291 carries an N-linked (GlcNAc...) asparagine glycan.

This sequence belongs to the RNase T2 family.

The protein localises to the vacuole lumen. The protein resides in the cytoplasm. The enzyme catalyses a ribonucleotidyl-ribonucleotide-RNA + H2O = a 3'-end 3'-phospho-ribonucleotide-RNA + a 5'-end dephospho-ribonucleoside-RNA + H(+). Functionally, rnase which modulates cell survival under stress conditions. Released from the vacuole to the cytoplasm during stress to promote tRNA and rRNA cleavage and to activate separately a downstream pathway that promotes cell death. Involved in cell size, vacuolar morphology and growth at high temperatures and high salt concentration. The chain is Ribonuclease T2-like 1-A (RNY1-A) from Candida albicans (strain SC5314 / ATCC MYA-2876) (Yeast).